Here is a 244-residue protein sequence, read N- to C-terminus: 5-oxoprolinase subunit A (244 aa).

The protein belongs to the LamB/PxpA family. As to quaternary structure, forms a complex composed of PxpA, PxpB and PxpC.

The enzyme catalyses 5-oxo-L-proline + ATP + 2 H2O = L-glutamate + ADP + phosphate + H(+). Catalyzes the cleavage of 5-oxoproline to form L-glutamate coupled to the hydrolysis of ATP to ADP and inorganic phosphate. The polypeptide is 5-oxoprolinase subunit A (Salmonella schwarzengrund (strain CVM19633)).